Reading from the N-terminus, the 474-residue chain is ATP-dependent rRNA helicase RRP3 (474 aa).

Over residues 1-10 the composition is skewed to basic residues; the sequence is MPSMKRRKLS. The disordered stretch occupies residues 1 to 43; that stretch reads MPSMKRRKLSHTPPQGEAEDGFSDSETSQASLQETPGNDEKIE. The segment covering 24–36 has biased composition (polar residues); that stretch reads DSETSQASLQETP. The Q motif signature appears at 48 to 76; the sequence is KSFKDLGIIDSLCEACDSLGYKAPTQIQA. Residues 79–250 form the Helicase ATP-binding domain; the sequence is IPLALQGRDL…RASLSNPLRV (172 aa). 92–99 is an ATP binding site; that stretch reads AETGSGKT. Residues 198–201 carry the DEAD box motif; it reads DEAD. A Helicase C-terminal domain is found at 278–422; sequence YLIYLLNEFP…EYKVEKEEVM (145 aa). The interval 442 to 474 is disordered; that stretch reads LHENRGKKGATLRNRRIGKGAKRSRDEMDREEG. A compositionally biased stretch (basic residues) spans 448–463; it reads KKGATLRNRRIGKGAK. Residues 464-474 show a composition bias toward basic and acidic residues; sequence RSRDEMDREEG.

The protein belongs to the DEAD box helicase family. DDX47/RRP3 subfamily. Interacts with the SSU processome.

The protein resides in the nucleus. It carries out the reaction ATP + H2O = ADP + phosphate + H(+). Its function is as follows. ATP-dependent rRNA helicase required for pre-ribosomal RNA processing. Involved in the maturation of the 35S-pre-rRNA and to its cleavage to mature 18S rRNA. The chain is ATP-dependent rRNA helicase RRP3 from Coccidioides immitis (strain RS) (Valley fever fungus).